The sequence spans 157 residues: Mediator of RNA polymerase II transcription subunit 10 (157 aa).

Belongs to the Mediator complex subunit 10 family. Component of the Mediator complex, which is composed of at least 21 subunits that form three structurally distinct submodules. The Mediator head module contains MED6, MED8, MED11, SRB4/MED17, SRB5/MED18, ROX3/MED19, SRB2/MED20 and SRB6/MED22, the middle module contains MED1, MED4, NUT1/MED5, MED7, CSE2/MED9, NUT2/MED10, SRB7/MED21 and SOH1/MED31, and the tail module contains MED2, PGD1/MED3, RGR1/MED14, GAL11/MED15 and SIN4/MED16. The head and the middle modules interact directly with RNA polymerase II, whereas the elongated tail module interacts with gene-specific regulatory proteins. NUT2/MED10 interacts directly with SRB7/MED21.

The protein localises to the nucleus. In terms of biological role, component of the Mediator complex, a coactivator involved in the regulated transcription of nearly all RNA polymerase II-dependent genes. Mediator functions as a bridge to convey information from gene-specific regulatory proteins to the basal RNA polymerase II transcription machinery. The Mediator complex, having a compact conformation in its free form, is recruited to promoters by direct interactions with regulatory proteins and serves for the assembly of a functional preinitiation complex with RNA polymerase II and the general transcription factors. The Mediator complex unfolds to an extended conformation and partially surrounds RNA polymerase II, specifically interacting with the unphosphorylated form of the C-terminal domain (CTD) of RNA polymerase II. The Mediator complex dissociates from the RNA polymerase II holoenzyme and stays at the promoter when transcriptional elongation begins. This chain is Mediator of RNA polymerase II transcription subunit 10 (NUT2), found in Saccharomyces cerevisiae (strain ATCC 204508 / S288c) (Baker's yeast).